The sequence spans 290 residues: MGKGLALDIGGTKIAAAVVTESGMLIGRQQIATPRGGAGQLAAALETLIAPYRHQVDFIAVASTGIISGGRLTALNPANLGGLADFPLYDCIRSISDLPCVLLNDGQAAAWAEYQALGDKNDNMMFVTVSTGVGGGIILNKKLLVGQRGLAGHIGHTLSDPHGVLCGCGRRGCVESVASGTAIGAETLGWKQPVSAATVFDMAQQGDAQAGKVINRSAAAIAQMLADMKMALDLEVVILGGSVGLAVGYLERVVAAQKTLPGIYRVPVQEAHHRQDSGLLGAALWARTSL.

Residues 6-13 (ALDIGGTK) and 132-139 (GVGGGIIL) contribute to the ATP site. Positions 156, 166, 168, and 173 each coordinate Zn(2+).

This sequence belongs to the ROK (NagC/XylR) family. NanK subfamily. In terms of assembly, homodimer.

The enzyme catalyses an N-acyl-D-mannosamine + ATP = an N-acyl-D-mannosamine 6-phosphate + ADP + H(+). It functions in the pathway amino-sugar metabolism; N-acetylneuraminate degradation; D-fructose 6-phosphate from N-acetylneuraminate: step 2/5. In terms of biological role, catalyzes the phosphorylation of N-acetylmannosamine (ManNAc) to ManNAc-6-P. The protein is N-acetylmannosamine kinase of Yersinia pseudotuberculosis serotype O:1b (strain IP 31758).